Here is a 180-residue protein sequence, read N- to C-terminus: NADH-quinone oxidoreductase subunit I (180 aa).

4Fe-4S ferredoxin-type domains lie at 50 to 80 (LTRD…LQKA) and 90 to 119 (EFFR…LTPD). Cysteine 60, cysteine 63, cysteine 66, cysteine 70, cysteine 99, cysteine 102, cysteine 105, and cysteine 109 together coordinate [4Fe-4S] cluster.

Belongs to the complex I 23 kDa subunit family. In terms of assembly, NDH-1 is composed of 13 different subunits. Subunits NuoA, H, J, K, L, M, N constitute the membrane sector of the complex. It depends on [4Fe-4S] cluster as a cofactor.

It localises to the cell inner membrane. It carries out the reaction a quinone + NADH + 5 H(+)(in) = a quinol + NAD(+) + 4 H(+)(out). In terms of biological role, NDH-1 shuttles electrons from NADH, via FMN and iron-sulfur (Fe-S) centers, to quinones in the respiratory chain. The immediate electron acceptor for the enzyme in this species is believed to be ubiquinone. Couples the redox reaction to proton translocation (for every two electrons transferred, four hydrogen ions are translocated across the cytoplasmic membrane), and thus conserves the redox energy in a proton gradient. This Shigella sonnei (strain Ss046) protein is NADH-quinone oxidoreductase subunit I.